A 317-amino-acid chain; its full sequence is ADIPOR-like receptor IZH2 (317 aa).

At 1–78 (MSTLLERTKS…TFKSLFYLHN (78 aa)) the chain is on the cytoplasmic side. A helical membrane pass occupies residues 79 to 99 (ESVNIYSHLIPALGFFTVLLL). The Extracellular portion of the chain corresponds to 100-110 (DKSTIKVFATT). A helical membrane pass occupies residues 111–131 (TWLDHMVIDLFYSGAFACLIL). At 132 to 153 (SSSFHCLKSHSLRIATLGNKLD) the chain is on the cytoplasmic side. Residues 154–174 (YLGICILIVTSMVSILYYGYF) form a helical membrane-spanning segment. At 175–176 (EK) the chain is on the extracellular side. A helical transmembrane segment spans residues 177-197 (FSLFCLFALITVSFGIACSIV). Over 198 to 212 (SLKDKFRKREWRPYR) the chain is Cytoplasmic. A helical membrane pass occupies residues 213–233 (AGLFVCFGLSSIIPIFSGLYC). Over 234–242 (YSFSEIWTQ) the chain is Extracellular. A helical membrane pass occupies residues 243–263 (IQLFWVLLGGVLYIIGAVLYG). The Cytoplasmic portion of the chain corresponds to 264–276 (MRFPEKICPGKFD). A helical membrane pass occupies residues 277 to 297 (IWGHSHQLFHFLVVIAALCHL). The Extracellular portion of the chain corresponds to 298-317 (RGLLNSYELVHIKMENGIVS).

This sequence belongs to the ADIPOR family.

The protein localises to the membrane. Its function is as follows. Probable receptor, which is involved in metabolic pathways that regulate lipid metabolism such as fatty acid oxidation. This is ADIPOR-like receptor IZH2 (IZH2) from Saccharomyces cerevisiae (strain ATCC 204508 / S288c) (Baker's yeast).